Consider the following 410-residue polypeptide: MTINATVKEAGFQPASRISSIGVSEILKIGARAAAMKREGKPVIILGAGEPDFDTPEHVKQAASDAIHRGETKYTALDGTPELKKAIREKFQRENGLAYELDEITVATGAKQILFNAMMASLDPGDEVIIPTPYWTSYSDIVHICEGKPVLIACDASSGFRLTAEKLEAAITPRTRWVLLNSPSNPSGAAYSAADYRPLLEVLLRHPHVWLLVDDMYEHIVYDGFRFVTPAQLEPGLKNRTLTVNGVSKAYAMTGWRIGYAGGPRELIKAMAVVQSQATSCPSSISQAASVAALNGPQDFLKERTESFQRRRDLVVNGLNAIDGLDCRVPEGAFYTFSGCAGVLGKVTPSGKRIKTDTDFCAYLLEDAHVAVVPGSAFGLSPFFRISYATSEAELKEALERIAAACDRLS.

Residues Gly-47, Trp-135, and Asn-185 each coordinate L-aspartate. Lys-249 carries the N6-(pyridoxal phosphate)lysine modification. An L-aspartate-binding site is contributed by Arg-385.

This sequence belongs to the class-I pyridoxal-phosphate-dependent aminotransferase family. Homodimer. The cofactor is pyridoxal 5'-phosphate.

It is found in the cytoplasm. The enzyme catalyses L-aspartate + 2-oxoglutarate = oxaloacetate + L-glutamate. It carries out the reaction L-2-aminoadipate + 2-oxoglutarate = 2-oxoadipate + L-glutamate. Its function is as follows. Catalyzes the reversible conversion of aspartate and 2-oxoglutarate to glutamate and oxaloacetate. Genetic evidence shows that this protein is involved in L-lysine catabolism. It may have 2-aminoadipate:2-oxoglutarate aminotransferase activity. This is Aspartate aminotransferase (aatB) from Rhizobium meliloti (strain 1021) (Ensifer meliloti).